We begin with the raw amino-acid sequence, 1463 residues long: Regulating synaptic membrane exocytosis protein 1 (1463 aa).

Residues 1–26 form a disordered region; the sequence is MSSAVGPRGPRPPTVPPPMQELPDLS. Residues 9–20 are compositionally biased toward pro residues; it reads GPRPPTVPPPMQ. A RabBD domain is found at 22–205; that stretch reads LPDLSHLTEE…TKSGAWFFGS (184 aa). The FYVE-type zinc finger occupies 133 to 193; that stretch reads KDDAPTCGIC…VCNLCRKQQE (61 aa). Zn(2+) contacts are provided by Cys139, Cys142, Cys155, Cys158, Cys163, Cys166, Cys185, and Cys188. Residues 205-393 form a disordered region; it reads SGPQQPSQDG…DVELESESVS (189 aa). The segment covering 206-222 has biased composition (polar residues); that stretch reads GPQQPSQDGTLSDTATG. Residues 227 to 240 show a composition bias toward basic and acidic residues; that stretch reads VPREKKARLQERSR. The segment covering 241–256 has biased composition (polar residues); that stretch reads SQTPLSTAAVSSQDTA. The span at 327-372 shows a compositional bias: basic and acidic residues; that stretch reads ADERERKERRETRRLEKGRSQDYPDRLEKREDGRVAEDEKQRKEEE. Over residues 381-391 the composition is skewed to acidic residues; that stretch reads SCEDVELESES. Ser413 carries the post-translational modification Phosphoserine. The PDZ domain maps to 440-526; the sequence is RTTMPKESGA…EPQVEIIVSR (87 aa). The interval 533-567 is disordered; it reads RIPESSHPPLESSSSSFESQKMERPSISVISPTSP. Over residues 535–551 the composition is skewed to low complexity; sequence PESSHPPLESSSSSFES. 2 positions are modified to phosphoserine: Ser563 and Ser566. Residues 577-700 form the C2 1 domain; the sequence is LPGQLSVKLW…ALLDDEPHWY (124 aa). Residues 705–856 form a disordered region; it reads HDESSLPLPQ…YSSEPDSELL (152 aa). At Ser716 the chain carries Phosphoserine. The segment covering 770-779 has biased composition (polar residues); it reads ATTLTVPEQQ. Phosphoserine is present on Ser812. Over residues 827–844 the composition is skewed to basic and acidic residues; that stretch reads RHHDASRSLADHRSRHAE. Ser866 is modified (phosphoserine). Positions 874 to 1049 are disordered; sequence SELQPSLDRA…RQLPQVPVRS (176 aa). Over residues 928 to 941 the composition is skewed to basic and acidic residues; the sequence is PENDRHSRKSERSS. Residues 1021–1035 are compositionally biased toward polar residues; sequence QGSPTQSPPADTSFG. Ser1023 carries the post-translational modification Phosphoserine. Position 1025 is a phosphothreonine (Thr1025). Phosphoserine occurs at positions 1027, 1079, 1081, 1082, 1110, 1111, and 1113. The disordered stretch occupies residues 1104–1161; sequence DNASAKSSDSDVSDVSAISRASSTSRLSSTSFMSEQSERPRGRISSFTPKMQGRRMGT. Over residues 1116–1137 the composition is skewed to low complexity; sequence SDVSAISRASSTSRLSSTSFMS. At Ser1187 the chain carries Phosphoserine. Residues 1216 to 1266 are disordered; that stretch reads RSRSTSQLSQTESGHKKLKSTIQRSTETGMAAEMRKMVRQPSRESTDGSIN. The span at 1248 to 1261 shows a compositional bias: basic and acidic residues; sequence EMRKMVRQPSREST. Positions 1309–1427 constitute a C2 2 domain; sequence AMGDIQIGME…DLSSMVIGWY (119 aa). Phosphoserine is present on residues Ser1448, Ser1451, Ser1454, and Ser1463.

As to quaternary structure, binds SNAP25, SYT1 and CACNA1B. Interaction with SYT1 is enhanced by calcium ions. Interaction with SNAP25 is weaker in the presence of calcium ions. Interacts with TSPOAP1 and RIMBP2; interacts with PPFIA3 and PPFIA4. Interacts with ERC1. Interacts with RAB3A, RAB3B and RAB3D that have been activated by GTP-binding. Interacts with RAB3C, RAB10, RAB26 and RAB37. Binds UNC13A. Phosphorylated by BRSK1.

It localises to the cell membrane. The protein resides in the synapse. Its subcellular location is the presynaptic cell membrane. Rab effector involved in exocytosis. May act as scaffold protein that regulates neurotransmitter release at the active zone. Essential for maintaining normal probability of neurotransmitter release and for regulating release during short-term synaptic plasticity. Plays a role in dendrite formation by melanocytes. The sequence is that of Regulating synaptic membrane exocytosis protein 1 (Rims1) from Mus musculus (Mouse).